Consider the following 508-residue polypeptide: Fasciclin-3 (508 aa).

The signal sequence occupies residues 1 to 20 (MSRIVFICLAAILTDALTWA). Residue Gln21 is modified to Pyrrolidone carboxylic acid. Topologically, residues 21 to 346 (QVNVEPNTAL…SSKPPSSSLD (326 aa)) are extracellular. Positions 44–106 (GRSINYCRIE…NGQVKCSLGV (63 aa)) constitute an Ig-like V-type domain. Ig-like C2-type domains are found at residues 126–223 (PIIE…ESVP) and 236–310 (APVH…GLTL). The cysteines at positions 150 and 211 are disulfide-linked. Residues Asn160, Asn257, and Asn300 are each glycosylated (N-linked (GlcNAc...) asparagine). The helical transmembrane segment at 347-370 (VAAIVGIVVAVAVLVLVVLLIVFA) threads the bilayer. Residues 371–508 (RATGRWCFGG…QSTSPVWTFK (138 aa)) are Cytoplasmic-facing. Residues 381–439 (KSIKTPTNETSDTESADIKATSTATATTTMGGVGVSAEEEETVNEQESPQEQQQQQQKK) are disordered. Residue Ser382 is modified to Phosphoserine. 2 stretches are compositionally biased toward low complexity: residues 400 to 409 (ATSTATATTT) and 425 to 437 (EQES…QQQQ). Residue Ser459 is modified to Phosphoserine.

In terms of tissue distribution, expressed on different subsets of axon bundles (fascicles) in insect embryos.

It is found in the membrane. In terms of biological role, mediates cell adhesion in a Ca(2+)-independent manner. It plays a role in axon outgrowth, guidance and fasciculation of the developing nervous system. Function in neurons is essential for adult survival, and is important for climbing behavior and activity. The chain is Fasciclin-3 (Fas3) from Drosophila melanogaster (Fruit fly).